Here is a 120-residue protein sequence, read N- to C-terminus: Large ribosomal subunit protein uL22 (120 aa).

The protein belongs to the universal ribosomal protein uL22 family. Part of the 50S ribosomal subunit.

This protein binds specifically to 23S rRNA; its binding is stimulated by other ribosomal proteins, e.g. L4, L17, and L20. It is important during the early stages of 50S assembly. It makes multiple contacts with different domains of the 23S rRNA in the assembled 50S subunit and ribosome. Functionally, the globular domain of the protein is located near the polypeptide exit tunnel on the outside of the subunit, while an extended beta-hairpin is found that lines the wall of the exit tunnel in the center of the 70S ribosome. The protein is Large ribosomal subunit protein uL22 of Borreliella afzelii (strain PKo) (Borrelia afzelii).